A 444-amino-acid polypeptide reads, in one-letter code: Trigger factor (444 aa).

The region spanning 163-248 (GDFLTVDFVG…AKALKKAVAP (86 aa)) is the PPIase FKBP-type domain.

It belongs to the FKBP-type PPIase family. Tig subfamily.

Its subcellular location is the cytoplasm. It catalyses the reaction [protein]-peptidylproline (omega=180) = [protein]-peptidylproline (omega=0). In terms of biological role, involved in protein export. Acts as a chaperone by maintaining the newly synthesized protein in an open conformation. Functions as a peptidyl-prolyl cis-trans isomerase. In Granulibacter bethesdensis (strain ATCC BAA-1260 / CGDNIH1), this protein is Trigger factor.